A 514-amino-acid polypeptide reads, in one-letter code: DNA damage-binding protein CMR1 (514 aa).

Positions 26-116 (NLDSLSQSIK…VKQEEKEELS (91 aa)) are disordered. Positions 34–44 (IKRELPRASET) are enriched in basic and acidic residues. Positions 45–55 (KKRKTTPRTKA) are enriched in basic residues. Basic and acidic residues-rich tracts occupy residues 56–65 (VKKEDVEPSR) and 92–116 (KFED…EELS). WD repeat units lie at residues 180 to 221 (ISHT…DDSE), 229 to 269 (PHGK…STEV), 280 to 320 (DYAL…KPLK), 327 to 367 (LHDK…KANA), 385 to 423 (SSRL…LIPD), 438 to 481 (GRWV…IAHL), and 483 to 514 (DSVG…YLFE).

Belongs to the WD repeat DDB2/WDR76 family.

Its function is as follows. DNA-binding protein that binds to both single- and double-stranded DNA. Binds preferentially to UV-damaged DNA. May be involved in DNA-metabolic processes. The protein is DNA damage-binding protein CMR1 (PRW1) of Scheffersomyces stipitis (strain ATCC 58785 / CBS 6054 / NBRC 10063 / NRRL Y-11545) (Yeast).